The primary structure comprises 427 residues: Acetyl-CoA acetyltransferase, mitochondrial (427 aa).

The transit peptide at 1 to 33 directs the protein to the mitochondrion; the sequence is MAVLAALLRGGARSRSPLLRRLVQEIRYVERSY. At K66 the chain carries N6-acetyllysine; alternate. Position 66 is an N6-succinyllysine; alternate (K66). Position 78 is an N6-succinyllysine (K78). The active-site Acyl-thioester intermediate is C126. K174, K181, K190, and K202 each carry N6-acetyllysine; alternate. K174, K181, K190, and K202 each carry N6-succinyllysine; alternate. Y219 provides a ligand contact to CoA. K(+) is bound at residue Y219. N6-acetyllysine; alternate occurs at positions 223 and 230. N6-succinyllysine; alternate occurs at positions 223 and 230. The residue at position 243 (K243) is an N6-succinyllysine. Residues K251 and K257 each carry the N6-acetyllysine modification. Residues 258–260 and K263 contribute to the CoA site; that span reads RVD. K263 bears the N6-acetyllysine; alternate mark. At K263 the chain carries N6-succinyllysine; alternate. Residues K266 and K268 each carry the N6-succinyllysine modification. An N6-acetyllysine modification is found at K273. 3 residues coordinate K(+): A280, A281, and A283. S284 serves as a coordination point for CoA. The residue at position 338 (K338) is an N6-acetyllysine. A K(+)-binding site is contributed by V381. Catalysis depends on C413, which acts as the Proton donor/acceptor.

It belongs to the thiolase-like superfamily. Thiolase family. Homotetramer. Succinylation at Lys-268, adjacent to a coenzyme A binding site. Desuccinylated by SIRT5.

It is found in the mitochondrion. It catalyses the reaction 2 acetyl-CoA = acetoacetyl-CoA + CoA. The catalysed reaction is propanoyl-CoA + acetyl-CoA = 2-methyl-3-oxobutanoyl-CoA + CoA. The protein operates within lipid metabolism; fatty acid beta-oxidation. Activated by potassium ions, but not sodium ions. Its function is as follows. This is one of the enzymes that catalyzes the last step of the mitochondrial beta-oxidation pathway, an aerobic process breaking down fatty acids into acetyl-CoA. Using free coenzyme A/CoA, catalyzes the thiolytic cleavage of medium- to long-chain 3-oxoacyl-CoAs into acetyl-CoA and a fatty acyl-CoA shortened by two carbon atoms. The activity of the enzyme is reversible and it can also catalyze the condensation of two acetyl-CoA molecules into acetoacetyl-CoA. Thereby, it plays a major role in ketone body metabolism. This is Acetyl-CoA acetyltransferase, mitochondrial (ACAT1) from Macaca fascicularis (Crab-eating macaque).